Reading from the N-terminus, the 348-residue chain is Dihydroorotase (348 aa).

Residues histidine 14 and histidine 16 each contribute to the Zn(2+) site. Residues 16 to 18 and asparagine 42 each bind substrate; that span reads HLR. Lysine 100, histidine 137, and histidine 175 together coordinate Zn(2+). At lysine 100 the chain carries N6-carboxylysine. Histidine 137 is a binding site for substrate. Leucine 220 contributes to the substrate binding site. Residue aspartate 248 participates in Zn(2+) binding. The active site involves aspartate 248. Substrate-binding residues include histidine 252 and alanine 264.

It belongs to the metallo-dependent hydrolases superfamily. DHOase family. Class II DHOase subfamily. As to quaternary structure, homodimer. Requires Zn(2+) as cofactor.

The enzyme catalyses (S)-dihydroorotate + H2O = N-carbamoyl-L-aspartate + H(+). The protein operates within pyrimidine metabolism; UMP biosynthesis via de novo pathway; (S)-dihydroorotate from bicarbonate: step 3/3. Catalyzes the reversible cyclization of carbamoyl aspartate to dihydroorotate. The polypeptide is Dihydroorotase (Pseudomonas fluorescens (strain SBW25)).